Consider the following 99-residue polypeptide: Acylphosphatase (99 aa).

The region spanning 5-97 is the Acylphosphatase-like domain; sequence VRQVMIRGRV…RPGERFSQLP (93 aa). Residues arginine 20 and asparagine 38 contribute to the active site.

It belongs to the acylphosphatase family.

It catalyses the reaction an acyl phosphate + H2O = a carboxylate + phosphate + H(+). The chain is Acylphosphatase (acyP) from Nitrobacter winogradskyi (strain ATCC 25391 / DSM 10237 / CIP 104748 / NCIMB 11846 / Nb-255).